Here is a 256-residue protein sequence, read N- to C-terminus: MILCIDVGNSHIYGGVFDGDEIKLRFRHTSKVSTSDELGIFLKSVLRENNCSPETIRKIAICSVVPQVDYSLRSACVKYFSIDPFLLQAGVKTGLNIKYRNPVEVGADRIANAIAATHSFPNQNIIVIDFGTATTFCAISHKKAYLGGAILPGLRLSADALSKNTAKLPSVEIIKTESVVGRSTIESIQSGVYYGVLGACKELIQRIHHEAFNGDQILILATGGFASLFDKQGLYDHLVPDLVLQGIRLAAMMNTA.

An ATP-binding site is contributed by 6–13 (DVGNSHIY). Substrate is bound by residues Tyr-99 and 106–109 (GADR). The active-site Proton acceptor is the Asp-108. Asp-129 is a K(+) binding site. An ATP-binding site is contributed by Thr-132. Thr-184 is a substrate binding site.

The protein belongs to the type III pantothenate kinase family. In terms of assembly, homodimer. NH4(+) serves as cofactor. The cofactor is K(+).

It localises to the cytoplasm. The catalysed reaction is (R)-pantothenate + ATP = (R)-4'-phosphopantothenate + ADP + H(+). It participates in cofactor biosynthesis; coenzyme A biosynthesis; CoA from (R)-pantothenate: step 1/5. Functionally, catalyzes the phosphorylation of pantothenate (Pan), the first step in CoA biosynthesis. This chain is Type III pantothenate kinase, found in Legionella pneumophila (strain Paris).